A 145-amino-acid polypeptide reads, in one-letter code: Large ribosomal subunit protein bL17 (145 aa).

It belongs to the bacterial ribosomal protein bL17 family. In terms of assembly, part of the 50S ribosomal subunit. Contacts protein L32.

The sequence is that of Large ribosomal subunit protein bL17 from Francisella tularensis subsp. holarctica (strain FTNF002-00 / FTA).